The following is a 330-amino-acid chain: Putative pentatricopeptide repeat-containing protein At5g36300 (330 aa).

9 PPR repeats span residues 10–44 (SLSM…GSRP), 45–75 (DPLS…VVRF), 83–113 (VRLY…KFRL), 114–148 (NSFV…GLPM), 149–179 (DVEI…LQRS), 185–215 (NIRT…IFED), 231–265 (SANL…GIEP), 266–296 (NLIM…IKET), and 302–330 (DVVT…LVTL).

Belongs to the PPR family. P subfamily.

The chain is Putative pentatricopeptide repeat-containing protein At5g36300 from Arabidopsis thaliana (Mouse-ear cress).